Here is a 427-residue protein sequence, read N- to C-terminus: MSIIKSVYARQILDSRGNPTIEVDVCTEQGFVGRAAVPSGASTGLHEAMELRDKDSAVYLGKGVQKAIKHVKEIIAPVLIGRSVFNQQAIDTLLIELDGTLNKARLGANAILGTSIAVAKAAAMSLNIPLYQYIGGLNAYILPTPMINIFNGGAHADNNVDIQEFMVMPIKANSFAEALRMGVEVFHQLGRILKEKGLSTNVGDEGGYASNLPSNEAAMEFILQAIEKAGYQPGEDISIALDAASTEFYQAEKEVYHFKKSTGIKLTSTELVDFWKNWVQKYPIISIEDGMAEDDWEGWHQLTQAIGSKVQLVGDDLFVTNTKRLAKGIEQNIANAVLIKMNQVGTLSETLDTVNLAKKHGYQNIISHRSGETEDSTIADLAVALNAGQIKTGSVSRTDRTAKYNQLLRIEETLGEHARFAGHPFKK.

(2R)-2-phosphoglycerate is bound at residue glutamine 163. The active-site Proton donor is glutamate 205. 3 residues coordinate Mg(2+): aspartate 242, glutamate 288, and aspartate 315. Residues lysine 340, arginine 369, serine 370, and lysine 391 each coordinate (2R)-2-phosphoglycerate. Lysine 340 acts as the Proton acceptor in catalysis.

The protein belongs to the enolase family. The cofactor is Mg(2+).

It localises to the cytoplasm. The protein resides in the secreted. It is found in the cell surface. It catalyses the reaction (2R)-2-phosphoglycerate = phosphoenolpyruvate + H2O. It functions in the pathway carbohydrate degradation; glycolysis; pyruvate from D-glyceraldehyde 3-phosphate: step 4/5. Catalyzes the reversible conversion of 2-phosphoglycerate (2-PG) into phosphoenolpyruvate (PEP). It is essential for the degradation of carbohydrates via glycolysis. This Amoebophilus asiaticus (strain 5a2) protein is Enolase.